We begin with the raw amino-acid sequence, 462 residues long: L-seryl-tRNA(Sec) selenium transferase (462 aa).

K292 is modified (N6-(pyridoxal phosphate)lysine).

This sequence belongs to the SelA family. It depends on pyridoxal 5'-phosphate as a cofactor.

It is found in the cytoplasm. It catalyses the reaction L-seryl-tRNA(Sec) + selenophosphate + H(+) = L-selenocysteinyl-tRNA(Sec) + phosphate. It functions in the pathway aminoacyl-tRNA biosynthesis; selenocysteinyl-tRNA(Sec) biosynthesis; selenocysteinyl-tRNA(Sec) from L-seryl-tRNA(Sec) (bacterial route): step 1/1. Its function is as follows. Converts seryl-tRNA(Sec) to selenocysteinyl-tRNA(Sec) required for selenoprotein biosynthesis. The protein is L-seryl-tRNA(Sec) selenium transferase of Geotalea daltonii (strain DSM 22248 / JCM 15807 / FRC-32) (Geobacter daltonii).